We begin with the raw amino-acid sequence, 287 residues long: Cysteine-rich repeat secretory protein 59 (287 aa).

A signal peptide spans 1–26 (METTKKLSPIFCFSSLLCLFFTMNQA). 2 Gnk2-homologous domains span residues 32-134 (HMDT…DKFF) and 140-250 (KKPN…ITTS). Residues asparagine 43, asparagine 47, asparagine 63, asparagine 72, asparagine 93, asparagine 103, asparagine 111, and asparagine 212 are each glycosylated (N-linked (GlcNAc...) asparagine).

It belongs to the cysteine-rich repeat secretory protein family.

The protein resides in the secreted. In Arabidopsis thaliana (Mouse-ear cress), this protein is Cysteine-rich repeat secretory protein 59 (CRRSP59).